The primary structure comprises 66 residues: Large ribosomal subunit protein bL35 (66 aa).

Over residues 1-16 (MPKMKTHKGSAKRFKK) the composition is skewed to basic residues. Positions 1 to 24 (MPKMKTHKGSAKRFKKTGTGQLKR) are disordered.

The protein belongs to the bacterial ribosomal protein bL35 family.

The polypeptide is Large ribosomal subunit protein bL35 (Anoxybacillus flavithermus (strain DSM 21510 / WK1)).